Reading from the N-terminus, the 686-residue chain is Solute carrier family 22 member 23 (686 aa).

2 disordered regions span residues 1 to 62 (MAID…GGGP) and 169 to 193 (GNRSNSSGADGGDTPPLPSPPDKGD). N-linked (GlcNAc...) asparagine glycosylation occurs at N24. Helical transmembrane passes span 234–254 (FSLLVGLIFGYLITGCIADWV) and 258–278 (PVLLFSIIFILIFGLTVALSV). N279 is a glycosylation site (N-linked (GlcNAc...) asparagine). 8 consecutive transmembrane segments (helical) span residues 288-308 (FFEGFCLAGIILTLYALRIEL), 315-335 (FMITMVASFVAMAGQFLMPGL), 344-364 (VLQALIICPFLLMLLYWSIFP), 467-487 (ADYYTTASIALVSCLAMCVVV), 494-514 (GGLLLFMILTALASLLQLGLL), 538-558 (IAFSIVGMFASHAVGSLSVFF), 569-589 (CGGLGLVLASAGFGMLTAPII), and 598-618 (FLHHIIFACCTLICIICILLL).

It belongs to the major facilitator (TC 2.A.1) superfamily. Organic cation transporter (TC 2.A.1.19) family.

Its subcellular location is the membrane. The protein is Solute carrier family 22 member 23 (SLC22A23) of Homo sapiens (Human).